The following is a 264-amino-acid chain: Tropinone reductase homolog At5g06060 (264 aa).

Position 15–39 (15–39) interacts with NADP(+); sequence LVTGGTRGIGRAVVEELAKFGAKVH. Position 148 (Ser148) interacts with substrate. Tyr161 functions as the Proton acceptor in the catalytic mechanism.

It belongs to the short-chain dehydrogenases/reductases (SDR) family. SDR65C subfamily.

The polypeptide is Tropinone reductase homolog At5g06060 (Arabidopsis thaliana (Mouse-ear cress)).